We begin with the raw amino-acid sequence, 260 residues long: Kallikrein-8 (260 aa).

The first 28 residues, 1–28 (MGRPPPCAIQTWILLFLLMGAWAGLTRA), serve as a signal peptide directing secretion. A propeptide spanning residues 29-32 (QGSK) is cleaved from the precursor. A Peptidase S1 domain is found at 33 to 257 (ILEGQECKPH…YTNWIKKTMG (225 aa)). Intrachain disulfides connect Cys39–Cys173, Cys58–Cys74, Cys145–Cys246, Cys152–Cys218, Cys184–Cys198, and Cys208–Cys233. The active-site Charge relay system is the His73. An N-linked (GlcNAc...) asparagine glycan is attached at Asn110. The active-site Charge relay system is the Asp120. Ser212 functions as the Charge relay system in the catalytic mechanism.

Belongs to the peptidase S1 family. Kallikrein subfamily. Interacts with SPINK9. As to expression, restricted to hippocampus.

It localises to the secreted. The protein resides in the cytoplasm. It catalyses the reaction Cleavage of amide substrates following the basic amino acids Arg or Lys at the P1 position, with a preference for Arg over Lys.. Its function is as follows. Serine protease which is capable of degrading a number of proteins such as casein, fibrinogen, kininogen, fibronectin and collagen type IV. Also cleaves L1CAM in response to increased neural activity. Induces neurite outgrowth and fasciculation of cultured hippocampal neurons. Plays a role in the formation and maturation of orphan and small synaptic boutons in the Schaffer-collateral pathway, regulates Schaffer-collateral long-term potentiation in the hippocampus and is required for memory acquisition and synaptic plasticity. Involved in skin desquamation and keratinocyte proliferation. Plays a role in the secondary phase of pathogenesis following spinal cord injury. The sequence is that of Kallikrein-8 (Klk8) from Rattus norvegicus (Rat).